Here is a 180-residue protein sequence, read N- to C-terminus: Kappa-casein (180 aa).

The signal sequence occupies residues 1–21 (MMKHFLLVVNILAVTLPFLAA). Thr132, Thr142, Thr147, and Thr153 each carry an O-linked (GalNAc...) threonine glycan. Ser160 carries the phosphoserine; alternate modification. O-linked (GalNAc...) serine; alternate glycosylation is present at Ser160.

Belongs to the kappa-casein family. As to expression, mammary gland specific. Secreted in milk.

The protein localises to the secreted. In terms of biological role, kappa-casein stabilizes micelle formation, preventing casein precipitation in milk. In Oryctolagus cuniculus (Rabbit), this protein is Kappa-casein (CSN3).